A 405-amino-acid polypeptide reads, in one-letter code: Tryptophan synthase beta chain (405 aa).

Position 98 is an N6-(pyridoxal phosphate)lysine (K98).

Belongs to the TrpB family. In terms of assembly, tetramer of two alpha and two beta chains. Pyridoxal 5'-phosphate serves as cofactor.

It carries out the reaction (1S,2R)-1-C-(indol-3-yl)glycerol 3-phosphate + L-serine = D-glyceraldehyde 3-phosphate + L-tryptophan + H2O. Its pathway is amino-acid biosynthesis; L-tryptophan biosynthesis; L-tryptophan from chorismate: step 5/5. In terms of biological role, the beta subunit is responsible for the synthesis of L-tryptophan from indole and L-serine. The sequence is that of Tryptophan synthase beta chain from Methylococcus capsulatus (strain ATCC 33009 / NCIMB 11132 / Bath).